Reading from the N-terminus, the 402-residue chain is MTTATDGFADGRLRVLVLGSTGSIGTQALEVIAANPDRFEVVGLAAGGSNLDTLRRQRAETGVTEIAIADERAAQLAGDIAYQEPDAVTRLVEETEADVVLNALVGALGLRPTLAALASGARLALANKESLVAGGPLVLQAAQPGQIVPVDSEHSALAQCLRAGTPDEVAKLVLTASGGPFRGWSAADLQEVTPEQAGAHPTWSMGPMNTLNSASLVNKGLELIETHLLFGISYERIEVVVHPQSIVHSMVTFVDGSTIAQASPPDMKLPISLALGWPRRVPGAARYCDFSQAQTWEFEPLDDEVFPAVELARHAGETGGCMTAVYNAANEEAAAAFLAGRISFPAIVGTIADVLHAADQWAVSPANVDDVLDAQRWARQRAQRAIAKASPAGACEKVSGLA.

NADPH-binding residues include Thr21, Gly22, Ser23, Ile24, Gly47, Asn50, and Asn127. A 1-deoxy-D-xylulose 5-phosphate-binding site is contributed by Lys128. Residue Glu129 participates in NADPH binding. Asp151 provides a ligand contact to Mn(2+). Positions 152, 153, 177, and 200 each coordinate 1-deoxy-D-xylulose 5-phosphate. A Mn(2+)-binding site is contributed by Glu153. Gly206 serves as a coordination point for NADPH. Positions 213, 218, 219, and 222 each coordinate 1-deoxy-D-xylulose 5-phosphate. A Mn(2+)-binding site is contributed by Glu222.

This sequence belongs to the DXR family. Mg(2+) serves as cofactor. Requires Mn(2+) as cofactor.

It catalyses the reaction 2-C-methyl-D-erythritol 4-phosphate + NADP(+) = 1-deoxy-D-xylulose 5-phosphate + NADPH + H(+). It functions in the pathway isoprenoid biosynthesis; isopentenyl diphosphate biosynthesis via DXP pathway; isopentenyl diphosphate from 1-deoxy-D-xylulose 5-phosphate: step 1/6. Catalyzes the NADPH-dependent rearrangement and reduction of 1-deoxy-D-xylulose-5-phosphate (DXP) to 2-C-methyl-D-erythritol 4-phosphate (MEP). This chain is 1-deoxy-D-xylulose 5-phosphate reductoisomerase, found in Mycobacterium ulcerans (strain Agy99).